We begin with the raw amino-acid sequence, 179 residues long: Large ribosomal subunit protein uL5 (179 aa).

The protein belongs to the universal ribosomal protein uL5 family. In terms of assembly, part of the 50S ribosomal subunit; part of the 5S rRNA/L5/L18/L25 subcomplex. Contacts the 5S rRNA and the P site tRNA. Forms a bridge to the 30S subunit in the 70S ribosome.

Functionally, this is one of the proteins that bind and probably mediate the attachment of the 5S RNA into the large ribosomal subunit, where it forms part of the central protuberance. In the 70S ribosome it contacts protein S13 of the 30S subunit (bridge B1b), connecting the 2 subunits; this bridge is implicated in subunit movement. Contacts the P site tRNA; the 5S rRNA and some of its associated proteins might help stabilize positioning of ribosome-bound tRNAs. This chain is Large ribosomal subunit protein uL5, found in Bordetella bronchiseptica (strain ATCC BAA-588 / NCTC 13252 / RB50) (Alcaligenes bronchisepticus).